Here is a 249-residue protein sequence, read N- to C-terminus: Eukaryotic translation initiation factor 6 (249 aa).

Belongs to the eIF-6 family. As to quaternary structure, monomer. Associates with the 60S ribosomal subunit.

Its subcellular location is the cytoplasm. It localises to the nucleus. The protein localises to the nucleolus. Functionally, binds to the 60S ribosomal subunit and prevents its association with the 40S ribosomal subunit to form the 80S initiation complex in the cytoplasm. May also be involved in ribosome biogenesis. The polypeptide is Eukaryotic translation initiation factor 6 (Babesia bovis).